Reading from the N-terminus, the 223-residue chain is Pre-mRNA-splicing factor SPF27 (223 aa).

Residues 139 to 223 (NENLLHMIDC…GENKENIEDY (85 aa)) adopt a coiled-coil conformation.

Belongs to the SPF27 family. Component of the pre-catalytic and catalytic spliceosome complexes. Component of the postcatalytic spliceosome P complex.

The protein localises to the nucleus. Required for pre-mRNA splicing as component of the activated spliceosome. May have a scaffolding role in the spliceosome assembly as it contacts all other components of the core complex. The protein is Pre-mRNA-splicing factor SPF27 (bcas2) of Xenopus tropicalis (Western clawed frog).